The sequence spans 110 residues: MTNYLYLAIAIAAEVVATTSLKAVAGFSKPLPLLLVVGGYVLAFSMLVLVMRTLPVGVVYAIWSGLGIVLVSLVAMFVYGQRLDPAALLGIGLIIAGVLVIQLFSRASGH.

4 helical membrane passes run 7-27 (LAIAIAAEVVATTSLKAVAGF), 31-51 (LPLLLVVGGYVLAFSMLVLVM), 58-78 (VVYAIWSGLGIVLVSLVAMFV), and 85-105 (PAALLGIGLIIAGVLVIQLFS).

Belongs to the drug/metabolite transporter (DMT) superfamily. Small multidrug resistance (SMR) (TC 2.A.7.1) family.

The protein resides in the cell membrane. In terms of biological role, confers resistance to ethidium bromide, acriflavine and methyl viologen. The protein is Multidrug transporter PA4990 of Pseudomonas aeruginosa (strain ATCC 15692 / DSM 22644 / CIP 104116 / JCM 14847 / LMG 12228 / 1C / PRS 101 / PAO1).